A 49-amino-acid polypeptide reads, in one-letter code: uncharacterized protein (49 aa).

Residues Trp16–Phe36 traverse the membrane as a helical segment.

It is found in the cell membrane. This is an uncharacterized protein from Bacillus subtilis (strain 168).